A 297-amino-acid polypeptide reads, in one-letter code: Homoserine kinase (297 aa).

82–92 (PLTRGLGSSAS) contacts ATP.

The protein belongs to the GHMP kinase family. Homoserine kinase subfamily.

It localises to the cytoplasm. The catalysed reaction is L-homoserine + ATP = O-phospho-L-homoserine + ADP + H(+). Its pathway is amino-acid biosynthesis; L-threonine biosynthesis; L-threonine from L-aspartate: step 4/5. Its function is as follows. Catalyzes the ATP-dependent phosphorylation of L-homoserine to L-homoserine phosphate. This is Homoserine kinase from Bacillus cereus (strain B4264).